Consider the following 225-residue polypeptide: MTPRLRLQPESVGIGMTSQRVRDRLVERLRESGIQDEATLNAVRTVPRHLFIDEALASRAYEDTALPIGHGQTISQPWVVARMTEAVLQVAPKKVLEVGTGSGYQGAILAALGLEVYTVERIGDLLRQARKRFRHLGMNVRSKHDDGRIGWPEHGPYDAIVVTAAAPALVDALVDQLAVGGRLVAPVGGASSQSLVQLTRGADGEIAQEVLAPVTFVPLLSGMLD.

Ser75 is a catalytic residue.

It belongs to the methyltransferase superfamily. L-isoaspartyl/D-aspartyl protein methyltransferase family.

The protein localises to the cytoplasm. It carries out the reaction [protein]-L-isoaspartate + S-adenosyl-L-methionine = [protein]-L-isoaspartate alpha-methyl ester + S-adenosyl-L-homocysteine. Catalyzes the methyl esterification of L-isoaspartyl residues in peptides and proteins that result from spontaneous decomposition of normal L-aspartyl and L-asparaginyl residues. It plays a role in the repair and/or degradation of damaged proteins. This Xanthomonas campestris pv. campestris (strain 8004) protein is Protein-L-isoaspartate O-methyltransferase.